Here is a 1238-residue protein sequence, read N- to C-terminus: Inner capsid protein VP2 (1238 aa).

The interval 1–35 is disordered; sequence MSTSAKKTPESKTEDKIEPVIEQTSNDKPEPPPNK. Basic and acidic residues predominate over residues 7–30; it reads KTPESKTEDKIEPVIEQTSNDKPE.

Belongs to the turreted BTV-fold inner capsid family. In terms of assembly, homodecamer; each decamer is made up of two conformers of VP2, called VP2A and VP2B. 12 homodecamers assemble to form an icosahedral capsid.

Its subcellular location is the virion. Its function is as follows. Inner capsid protein that self-assembles to form an icosahedral capsid with a T=2 symmetry, which consists of 120 copies of VP2, with channels at each of its five-fold vertices. This capsid constitutes the innermost concentric layer of the viral mature particle. The polypeptide is Inner capsid protein VP2 (S2) (Cryphonectria parasitica (Chestnut blight fungus)).